Consider the following 255-residue polypeptide: Folate receptor alpha (255 aa).

Positions 1–24 (MAHLMTVQLLLLVMWMAECAQSRA) are cleaved as a signal peptide. 8 disulfides stabilise this stretch: cysteine 35–cysteine 63, cysteine 55–cysteine 103, cysteine 64–cysteine 107, cysteine 87–cysteine 173, cysteine 94–cysteine 144, cysteine 133–cysteine 207, cysteine 137–cysteine 187, and cysteine 150–cysteine 167. Asparagine 67 carries an N-linked (GlcNAc...) asparagine glycan. Folate-binding positions include aspartate 101, tyrosine 105, 122–126 (WRKER), 155–160 (HKGWNW), and serine 194. A glycan (N-linked (GlcNAc...) asparagine) is linked at asparagine 159. Asparagine 199 carries N-linked (GlcNAc...) asparagine glycosylation. The GPI-anchor amidated serine moiety is linked to residue serine 232. A propeptide spans 233 to 255 (GAGFHGTWPLLCSLSLVLLWVIS) (removed in mature form).

This sequence belongs to the folate receptor family. In terms of processing, the secreted form is derived from the membrane-bound form either by cleavage of the GPI anchor, or/and by proteolysis catalyzed by a metalloprotease. As to expression, detected in kidney proximal tubules (at protein level).

The protein localises to the cell membrane. It localises to the apical cell membrane. Its subcellular location is the basolateral cell membrane. The protein resides in the secreted. It is found in the cytoplasmic vesicle. The protein localises to the clathrin-coated vesicle. It localises to the endosome. Functionally, binds to folate and reduced folic acid derivatives and mediates delivery of 5-methyltetrahydrofolate and folate analogs into the interior of cells. Has high affinity for folate and folic acid analogs at neutral pH. Exposure to slightly acidic pH after receptor endocytosis triggers a conformation change that strongly reduces its affinity for folates and mediates their release. Required for normal embryonic development and normal cell proliferation. Required for renal folate reabsorption. In Mus musculus (Mouse), this protein is Folate receptor alpha (Folr1).